The chain runs to 113 residues: Nucleoid-associated protein Synpcc7942_0464 (113 aa).

Belongs to the YbaB/EbfC family. Homodimer.

Its subcellular location is the cytoplasm. It is found in the nucleoid. Binds to DNA and alters its conformation. May be involved in regulation of gene expression, nucleoid organization and DNA protection. The sequence is that of Nucleoid-associated protein Synpcc7942_0464 from Synechococcus elongatus (strain ATCC 33912 / PCC 7942 / FACHB-805) (Anacystis nidulans R2).